The following is a 304-amino-acid chain: Bifunctional protein FolD (304 aa).

NADP(+) is bound by residues 170–172 (GRS), Ser-195, and Ile-236.

Belongs to the tetrahydrofolate dehydrogenase/cyclohydrolase family. In terms of assembly, homodimer.

It catalyses the reaction (6R)-5,10-methylene-5,6,7,8-tetrahydrofolate + NADP(+) = (6R)-5,10-methenyltetrahydrofolate + NADPH. It carries out the reaction (6R)-5,10-methenyltetrahydrofolate + H2O = (6R)-10-formyltetrahydrofolate + H(+). Its pathway is one-carbon metabolism; tetrahydrofolate interconversion. In terms of biological role, catalyzes the oxidation of 5,10-methylenetetrahydrofolate to 5,10-methenyltetrahydrofolate and then the hydrolysis of 5,10-methenyltetrahydrofolate to 10-formyltetrahydrofolate. The polypeptide is Bifunctional protein FolD (Anaplasma phagocytophilum (strain HZ)).